A 2056-amino-acid polypeptide reads, in one-letter code: MSSRPNNNPGGSLRRSQRNTAGAQPQEDTAGGRSNLEQAENKTHSLPESRKSHFKTPKVQSNTTSGPSKGHSSKRGCSSSNLLPNPEDTERINTTDTQRPKKDHVRGVKRSASPDHSRTNSPSSAKKPKALQHPEPSSGPRRPNNKPKKRQGSQEQPFPSASLPSTSKAHSRKGGSQGTSPLPKRKRTELSPCVKSSSAAVISTGAEDRPPKLSKLASKSATSAKAGCSNITDSSSSASTSSSSSAVASVSAAPPGARVKQGKDQNKARRSRSASSPSPRRSSREKEQTKTSSSSKFDWAARFSPKVSLPKTKLSLPGSSKTETSKPGPSGLQAKLANLRKSTKKRSESPPAELPSLRRSTRQKTTGSCASTSRRGSGLGKRAAAEARRQEKMADPDNQEGANSSAARTDETAQGAAASSSVAGAVGMTTSGESESDDSEMGRLQALLEARGLPPHLFGPLGPRMSQLFHRTIGSGASSKAQQLLQGLQATDESQQLQAVIEMCQLLVMGNEETLGGFPVKSVVPALITLLQMEHNFDIMNHACRALTYMMEALPRSSAVVVDAIPVFLEKLQVIQCIDVAEQALTALEMLSRRHSKAILQAGGLADCLLYLEFFSINAQRNALAIAANCCQSISPDEFHFVADSLPLLTQRLTHQDKKSVESTCLCFARLVDNFQHEENLLQQVASRDLLTNIQQLLVVTPPILSSGMFIMVVRMFSLMCSNCPTLAVQLMKQNIAETLHFLLCGASNGSCLEQIDLVPRSPQELYELTSLICELMPCLPKEGIFAVDTMLKKGNAQNTDGAIWQWRDDRGLWHPYSRIDSRIIEAAHQVGEDEISLSTLGRVYTIDFNSMQQINEDTGTARAIQRKPNPVANANTTGHSELKRDDARAQLMKEDPELAKSFIKTLFGVLYEVYSSSAGPAVRHKCLRAILRIIYFADAELLKDVLKNHAVSSHIASMLSSQDLKIVVGALQMAEILMQKLPDIFSVYFRREGVMHQVKNLAESEALLTSPPKVCTNGSGSLASTTTISTGSGTASGNSAADLGSPSLQHRDDSLDLSPPGRLSDVLKRKRLPKRGPRRPKYSPPRDEDKVDNQAKSPTTTQSPKSFLASLNPKTWGRLSTQSNSNNIEPARTAGVSGLARAASKDTISNNRERIRGWIKEQAHKFVERYFSSENMDGSNPALNVLQRLCNATEQLNLQVDGGVECLVEIRSIVSESDVSSFEIQHSGFVKQLLLYLTSKSDKDIVSRDIRLKRFLHVFFGTPLPGEEPLAKLDPTENRHLLALVHKMNNCLSQMEQFPVKVHDFPSGNGTGSRGSQALKFFNTHQLKCQLQRHPDCTNVKQWKGGPVKIDPLALVQAIERYLVVRGYGRVREDDEDSDDDGSDEEIDESLAAQFLNSGNVRHRLQFYIGDHLLPYNMTVYQAVRQYSIQTEEERESTDDESNPLGRAGIWTKTHTIWYKPVREEEESAKDTVGGKRGRAQTAPTKTSPRNSKKHDELWHGKDGVCPRILNPLEVYLISGPPENITFDDPSLDVVILLRVLHAISRYWYYLYDNAVCKEIIPTSEFNNSKLTAKANRQLQDPLVIMTGNIPTWLTELGKSCPFFFPFDTRQMLFYVTAFDRDRAMQRLLDTNPEINQSDSQDSRVAPRLDRKKRTVNREDLLKQAESVMQDLGSSRAMLEIQYENEVGTGLGPTLEFYALVSQELQRADLGLWRGEEVTLPNPKGSQEGTKYIHNLQGLFALPFGRTAKPAHIAKVKMKFRFLGKLMAKAIMDFRLVDIPLGLPFYKWMLRQESSLATHDLVNIDPVVAKSVYHLEDIVRQKKRLEQDKAQTKESLQFALESLNMNGCSVEDLGLDFTLPGFPNIELKKGGKDVPVTIHNLEDYVRLVIYWALNEGVSRQLDSFRDGFESVFPLNHLQYFYPEELDQLLCGSRADPWDVKTLMECCRPDHGYTHDSRAVKFLFEILSSFDKEQQRLFLQFVTGSPRLPVGGFRSLNPPLTIVRKTFEATENPDDFLPSVMTCVNYLKLPDYSSIDNMREKLLMAAREGQQSFHLS.

Composition is skewed to polar residues over residues 1-10 (MSSRPNNNPG) and 18-27 (RNTAGAQPQE). The tract at residues 1-440 (MSSRPNNNPG…SGESESDDSE (440 aa)) is disordered. The segment covering 39-51 (AENKTHSLPESRK) has biased composition (basic and acidic residues). Composition is skewed to polar residues over residues 58 to 67 (KVQSNTTSGP) and 153 to 168 (SQEQ…STSK). Low complexity-rich tracts occupy residues 213–226 (LSKL…SAKA) and 234–253 (SSSS…VSAA). Polar residues-rich tracts occupy residues 317–327 (PGSSKTETSKP) and 363–375 (QKTT…TSRR). The span at 383-395 (AAAEARRQEKMAD) shows a compositional bias: basic and acidic residues. Over residues 415–433 (GAAASSSVAGAVGMTTSGE) the composition is skewed to low complexity. Residues 791–905 (MLKKGNAQNT…DPELAKSFIK (115 aa)) form the WWE domain. Residues 1027–1042 (TTISTGSGTASGNSAA) are compositionally biased toward low complexity. Disordered stretches follow at residues 1027-1147 (TTIS…ASKD), 1465-1500 (EEEE…DELW), and 1632-1651 (TNPE…PRLD). Residues 1069–1082 (KRKRLPKRGPRRPK) are compositionally biased toward basic residues. Residues 1085 to 1094 (PPRDEDKVDN) show a composition bias toward basic and acidic residues. Composition is skewed to polar residues over residues 1095–1106 (QAKSPTTTQSPK) and 1119–1129 (RLSTQSNSNNI). Residues 1560 to 1634 (EIIPTSEFNN…AMQRLLDTNP (75 aa)) form a K-box region. Residues 1949 to 2056 (PDHGYTHDSR…REGQQSFHLS (108 aa)) enclose the HECT domain. The Glycyl thioester intermediate role is filled by cysteine 2023.

The protein belongs to the UPL family. K-HECT subfamily.

Its subcellular location is the nucleus. It is found in the nucleoplasm. The catalysed reaction is S-ubiquitinyl-[E2 ubiquitin-conjugating enzyme]-L-cysteine + [acceptor protein]-L-lysine = [E2 ubiquitin-conjugating enzyme]-L-cysteine + N(6)-ubiquitinyl-[acceptor protein]-L-lysine.. The protein operates within protein modification; protein ubiquitination. In terms of biological role, E3 ubiquitin-protein ligase involved in ubiquitin fusion degradation (UFD) pathway and regulation of DNA repair. Part of the ubiquitin fusion degradation (UFD) pathway, a process that mediates ubiquitination of protein at their N-terminus, regardless of the presence of lysine residues in target proteins. Acts as a key regulator of DNA damage response by acting as a suppressor of RNF168, an E3 ubiquitin-protein ligase that promotes accumulation of 'Lys-63'-linked histone H2A and H2AX at DNA damage sites, thereby acting as a guard against excessive spreading of ubiquitinated chromatin at damaged chromosomes. In Xenopus tropicalis (Western clawed frog), this protein is E3 ubiquitin-protein ligase TRIP12 (trip12).